Consider the following 340-residue polypeptide: 4-amino-5-hydroxymethyl-2-methylpyrimidine phosphate synthase THI5 (340 aa).

Lys62 is subject to N6-(pyridoxal phosphate)lysine. Residue His66 is part of the active site. 115-118 (GEFG) is a pyridoxal 5'-phosphate binding site. The CCCFC; essential for catalytic activity, may be the site of iron coordination signature appears at 195 to 199 (CCCFC).

Belongs to the NMT1/THI5 family. As to quaternary structure, homodimer. Requires Fe cation as cofactor.

It carries out the reaction N(6)-(pyridoxal phosphate)-L-lysyl-[4-amino-5-hydroxymethyl-2-methylpyrimidine phosphate synthase] + L-histidyl-[4-amino-5-hydroxymethyl-2-methylpyrimidine phosphate synthase] + 2 Fe(3+) + 4 H2O = L-lysyl-[4-amino-5-hydroxymethyl-2-methylpyrimidine phosphate synthase] + (2S)-2-amino-5-hydroxy-4-oxopentanoyl-[4-amino-5-hydroxymethyl-2-methylpyrimidine phosphate synthase] + 4-amino-2-methyl-5-(phosphooxymethyl)pyrimidine + 3-oxopropanoate + 2 Fe(2+) + 2 H(+). Its pathway is cofactor biosynthesis; thiamine diphosphate biosynthesis. Functionally, responsible for the formation of the pyrimidine heterocycle in the thiamine biosynthesis pathway. Catalyzes the formation of hydroxymethylpyrimidine phosphate (HMP-P) from histidine and pyridoxal phosphate (PLP). The protein uses PLP and the active site histidine to form HMP-P, generating an inactive enzyme. The enzyme can only undergo a single turnover, which suggests it is a suicide enzyme. The polypeptide is 4-amino-5-hydroxymethyl-2-methylpyrimidine phosphate synthase THI5 (Saccharomyces cerevisiae (strain ATCC 204508 / S288c) (Baker's yeast)).